A 245-amino-acid polypeptide reads, in one-letter code: 8-amino-3,8-dideoxy-manno-octulosonate cytidylyltransferase (245 aa).

Belongs to the KdsB family.

Its subcellular location is the cytoplasm. The enzyme catalyses 8-amino-3,8-dideoxy-alpha-D-manno-octulosonate + CTP = CMP-8-amino-3,8-dideoxy-alpha-D-manno-oct-2-ulosonate + diphosphate. Its pathway is bacterial outer membrane biogenesis; lipopolysaccharide biosynthesis. Functionally, activates KDO8N (a required 8-carbon sugar) for incorporation into bacterial lipopolysaccharide in the Shewanella genus. This Shewanella loihica (strain ATCC BAA-1088 / PV-4) protein is 8-amino-3,8-dideoxy-manno-octulosonate cytidylyltransferase.